The chain runs to 273 residues: MLSGNGQLDANKWTPFINSQTWTTYILPGLWGTLKSAVFSVILALVMGTALGLGRISEIRILRWFCAVIIETFRAIPVLILMIFAYQMFAQYNIVPSSQLAFAAVVFGLTMYNGSVIAEILRSGIASLPKGQKEAAIALGMSSRQTTWSILLPQAVAAMLPALISQMVIALKDSALGYQIGYIEVVRSGIQSASVNRNYLAALFVVALIMIVLNFSLTALASRIERQLRAGRARKNIVAKVPEQPDQGLETKDNVNVDWQDPDYKDLKTPGVQ.

Helical transmembrane passes span 26-46 (ILPG…LALV), 64-84 (WFCA…LMIF), 100-120 (LAFA…IAEI), 150-170 (ILLP…MVIA), and 200-220 (LAAL…LTAL). Residues 30–221 (LWGTLKSAVF…VLNFSLTALA (192 aa)) form the ABC transmembrane type-1 domain. The tract at residues 242–273 (PEQPDQGLETKDNVNVDWQDPDYKDLKTPGVQ) is disordered. The segment covering 262–273 (PDYKDLKTPGVQ) has biased composition (basic and acidic residues).

The protein belongs to the binding-protein-dependent transport system permease family. HisMQ subfamily. As to quaternary structure, the complex is composed of two ATP-binding proteins (GluA), two transmembrane proteins (GluC and GluD) and a solute-binding protein (GluB).

It localises to the cell membrane. Its function is as follows. Part of the ABC transporter complex GluABCD involved in glutamate uptake. Probably responsible for the translocation of the substrate across the membrane. This Corynebacterium glutamicum (strain ATCC 13032 / DSM 20300 / JCM 1318 / BCRC 11384 / CCUG 27702 / LMG 3730 / NBRC 12168 / NCIMB 10025 / NRRL B-2784 / 534) protein is Glutamate transport system permease protein GluD.